Consider the following 32-residue polypeptide: Hainantoxin F8-35.23 (32 aa).

Expressed by the venom gland.

It localises to the secreted. The polypeptide is Hainantoxin F8-35.23 (Cyriopagopus hainanus (Chinese bird spider)).